A 537-amino-acid polypeptide reads, in one-letter code: Eukaryotic translation initiation factor 3 subunit L (537 aa).

A PCI domain is found at Thr300 to His512.

Belongs to the eIF-3 subunit L family. Component of the eukaryotic translation initiation factor 3 (eIF-3) complex.

The protein localises to the cytoplasm. Component of the eukaryotic translation initiation factor 3 (eIF-3) complex, which is involved in protein synthesis of a specialized repertoire of mRNAs and, together with other initiation factors, stimulates binding of mRNA and methionyl-tRNAi to the 40S ribosome. The eIF-3 complex specifically targets and initiates translation of a subset of mRNAs involved in cell proliferation. The polypeptide is Eukaryotic translation initiation factor 3 subunit L (Culex quinquefasciatus (Southern house mosquito)).